The primary structure comprises 523 residues: Calcium-dependent protein kinase 34 (523 aa).

Positions 1 to 60 (MGNCCSHGRDSDDNKEEPRPENGGGGVGAAEASVRASKHPPASPPPATKQGPIGPVLGRP) are disordered. A lipid anchor (N-myristoyl glycine) is attached at Gly2. Residues 7–20 (HGRDSDDNKEEPRP) are compositionally biased toward basic and acidic residues. Residues 68 to 326 (YTLGKELGRG…AAQVLNHPWI (259 aa)) form the Protein kinase domain. Residues 74–82 (LGRGQFGVT) and Lys97 each bind ATP. The active-site Proton acceptor is the Asp192. Ser232 is subject to Phosphoserine. The segment at 332–362 (APDVPLDNAVMSRLKQFKAMNNFKKVALRVI) is autoinhibitory domain. EF-hand domains are found at residues 369 to 404 (EEIMGLKEMFKGMDTDNSGTITLEELRQGLAKQGTR), 405 to 440 (LSEYEVQQLMEAADADGNGTIDYGEFIAATMHINRL), 441 to 476 (DREEHLYSAFQHFDKDNSGYITTEELEQALREFGMN), and 480 to 511 (DIKEIISEVDGDNDGRINYEEFVAMMRKGNPD). Ca(2+) is bound by residues Asp382, Asp384, Ser386, Thr388, Glu393, Asp418, Asp420, Asn422, Thr424, Glu429, Asp454, Asp456, Ser458, Tyr460, Glu465, Asp489, Asp491, Asp493, Arg495, and Glu500.

The protein belongs to the protein kinase superfamily. Ser/Thr protein kinase family. CDPK subfamily.

The protein localises to the membrane. It carries out the reaction L-seryl-[protein] + ATP = O-phospho-L-seryl-[protein] + ADP + H(+). It catalyses the reaction L-threonyl-[protein] + ATP = O-phospho-L-threonyl-[protein] + ADP + H(+). With respect to regulation, activated by calcium. Autophosphorylation may play an important role in the regulation of the kinase activity. May play a role in signal transduction pathways that involve calcium as a second messenger. In Arabidopsis thaliana (Mouse-ear cress), this protein is Calcium-dependent protein kinase 34 (CPK34).